The sequence spans 97 residues: Conotoxin Cal6.1a (97 aa).

A signal peptide spans 1–22; the sequence is MKLTTVLVVALLVLAACQFTVT. The segment at 23–46 is disordered; sequence DNSGDDPENPSLRSVGENQNPDST. The propeptide occupies 23 to 68; the sequence is DNSGDDPENPSLRSVGENQNPDSTKTITAWATRDMTNMRRGLNRPS. 3 cysteine pairs are disulfide-bonded: Cys71–Cys87, Cys78–Cys91, and Cys86–Cys96.

It belongs to the conotoxin O1 superfamily. Expressed by the venom duct.

The protein resides in the secreted. In terms of biological role, probable neurotoxin with unknown target. Possibly targets ion channels. The polypeptide is Conotoxin Cal6.1a (Californiconus californicus (California cone)).